Here is a 176-residue protein sequence, read N- to C-terminus: Nucleoside triphosphate/diphosphate phosphatase (176 aa).

Arg23 serves as the catalytic Proton donor. Asn87, Asp103, Asp105, Asp107, Asp120, and Glu123 together coordinate Mg(2+).

The protein belongs to the Ntdp family. Requires Mg(2+) as cofactor.

It catalyses the reaction a ribonucleoside 5'-triphosphate + H2O = a ribonucleoside 5'-diphosphate + phosphate + H(+). The catalysed reaction is a ribonucleoside 5'-diphosphate + H2O = a ribonucleoside 5'-phosphate + phosphate + H(+). Functionally, has nucleoside phosphatase activity towards nucleoside triphosphates and nucleoside diphosphates. In Bacillus cereus (strain B4264), this protein is Nucleoside triphosphate/diphosphate phosphatase.